The primary structure comprises 207 residues: Claudin-11 (207 aa).

Methionine 1 is a topological domain (cytoplasmic). The helical transmembrane segment at 2–22 threads the bilayer; sequence VATCLQVVGFVTSFVGWIGVI. Over 23 to 82 the chain is Extracellular; it reads VTTSTNDWVVTCGYTIPTCRKLDELGSKGLWADCVMATGLYHCKPLVDILILPGYVQACR. Residues 83–103 traverse the membrane as a helical segment; that stretch reads ALMIAASVLGLPAILLLLTVL. Topologically, residues 104-122 are cytoplasmic; the sequence is PCIRMGHEPGVAKYRRAQL. The helical transmembrane segment at 123–143 threads the bilayer; the sequence is AGVLLILLALCAIVATIWFPV. At 144-157 the chain is on the extracellular side; the sequence is CAHRETTIVSFGYS. The chain crosses the membrane as a helical span at residues 158–178; it reads LYAGWIGAVLCLVGGCVILCC. The Cytoplasmic segment spans residues 179-207; that stretch reads AGDAQAFGENRFYYSSGSSSPTHAKSAHV. 4 positions are modified to phosphoserine: serine 193, serine 194, serine 197, and serine 198.

This sequence belongs to the claudin family. Interacts with tetraspanin-3/TSPAN3. Interacts with OCLN.

It is found in the cell junction. The protein localises to the tight junction. The protein resides in the cell membrane. Plays a major role in tight junction-specific obliteration of the intercellular space, through calcium-independent cell-adhesion activity. The protein is Claudin-11 (CLDN11) of Macaca fascicularis (Crab-eating macaque).